The chain runs to 527 residues: Light-independent protochlorophyllide reductase subunit B (527 aa).

Asp-36 contributes to the [4Fe-4S] cluster binding site. The active-site Proton donor is Asp-292. 428–429 lines the substrate pocket; it reads GL.

The protein belongs to the ChlB/BchB/BchZ family. As to quaternary structure, protochlorophyllide reductase is composed of three subunits; BchL, BchN and BchB. Forms a heterotetramer of two BchB and two BchN subunits. [4Fe-4S] cluster serves as cofactor.

The enzyme catalyses chlorophyllide a + oxidized 2[4Fe-4S]-[ferredoxin] + 2 ADP + 2 phosphate = protochlorophyllide a + reduced 2[4Fe-4S]-[ferredoxin] + 2 ATP + 2 H2O. Its pathway is porphyrin-containing compound metabolism; bacteriochlorophyll biosynthesis (light-independent). Its function is as follows. Component of the dark-operative protochlorophyllide reductase (DPOR) that uses Mg-ATP and reduced ferredoxin to reduce ring D of protochlorophyllide (Pchlide) to form chlorophyllide a (Chlide). This reaction is light-independent. The NB-protein (BchN-BchB) is the catalytic component of the complex. This chain is Light-independent protochlorophyllide reductase subunit B, found in Chlorobium phaeovibrioides (strain DSM 265 / 1930) (Prosthecochloris vibrioformis (strain DSM 265)).